The following is a 100-amino-acid chain: UPF0213 protein YhbQ (100 aa).

The GIY-YIG domain occupies 2–77 (TPWFLYLIRT…KQLTKRQKER (76 aa)).

This sequence belongs to the UPF0213 family.

The chain is UPF0213 protein YhbQ from Escherichia coli O17:K52:H18 (strain UMN026 / ExPEC).